We begin with the raw amino-acid sequence, 334 residues long: Small ribosomal subunit protein uS2 (334 aa).

This sequence belongs to the universal ribosomal protein uS2 family.

The polypeptide is Small ribosomal subunit protein uS2 (Rhodopseudomonas palustris (strain BisB18)).